Here is a 590-residue protein sequence, read N- to C-terminus: tRNA-guanine(15) transglycosylase (590 aa).

Aspartate 90 acts as the Nucleophile in catalysis. Aspartate 125 is a substrate binding site. The Zn(2+) site is built by cysteine 278, cysteine 280, and cysteine 283. The PUA domain occupies 502 to 577; it reads KGRVVVKGLF…HPFIIIRRHV (76 aa).

The protein belongs to the archaeosine tRNA-ribosyltransferase family. It depends on Zn(2+) as a cofactor.

It carries out the reaction guanosine(15) in tRNA + 7-cyano-7-deazaguanine = 7-cyano-7-carbaguanosine(15) in tRNA + guanine. It functions in the pathway tRNA modification; archaeosine-tRNA biosynthesis. In terms of biological role, exchanges the guanine residue with 7-cyano-7-deazaguanine (preQ0) at position 15 in the dihydrouridine loop (D-loop) of archaeal tRNAs. This Korarchaeum cryptofilum (strain OPF8) protein is tRNA-guanine(15) transglycosylase.